Here is a 955-residue protein sequence, read N- to C-terminus: Leucine--tRNA ligase (955 aa).

Positions 51-61 match the 'HIGH' region motif; the sequence is PYLNGVLHAGH. A 'KMSKS' region motif is present at residues 647 to 651; that stretch reads KLSKS. An ATP-binding site is contributed by K650.

The protein belongs to the class-I aminoacyl-tRNA synthetase family.

It is found in the cytoplasm. The enzyme catalyses tRNA(Leu) + L-leucine + ATP = L-leucyl-tRNA(Leu) + AMP + diphosphate. The chain is Leucine--tRNA ligase from Methanococcus maripaludis (strain DSM 14266 / JCM 13030 / NBRC 101832 / S2 / LL).